The sequence spans 475 residues: BTB/POZ domain-containing protein 10 (475 aa).

The segment at 1-143 is disordered; the sequence is MAGRPHPYDG…SSQSSSDGSC (143 aa). Residues 22–31 are compositionally biased toward basic residues; it reads LHSRPRKLYK. Residues 57 to 80 are compositionally biased toward basic and acidic residues; that stretch reads GHERSRDRRRSSDRSRDSSHERTE. Over residues 81 to 94 the composition is skewed to polar residues; sequence SQLTPCIRNVTSPT. A compositionally biased stretch (basic and acidic residues) spans 97–107; that stretch reads HHVEREKDHSS. Low complexity predominate over residues 108 to 142; that stretch reads SRPSSPRPQKASPNGSISSAGNSSRNSSQSSSDGS. Positions 146–475 are interaction with AKT family members; sequence AGEMVFVYEN…LDPDAQNPTL (330 aa). A BTB domain is found at 167 to 241; it reads ERVTLIVDNT…YKTGIIRCPD (75 aa). The disordered stretch occupies residues 456–475; the sequence is PIHPPSGNSDLDPDAQNPTL.

As to quaternary structure, interacts (via C-terminal 330-amino-acid region) with AKT1; AKT2 and AKT3. Interacts with PPP2CA and PPP1CA.

It is found in the nucleus. The protein localises to the cytoplasm. Its function is as follows. Plays a major role as an activator of AKT family members by inhibiting PPP2CA-mediated dephosphorylation, thereby keeping AKTs activated. Plays a role in preventing motor neuronal death and in accelerating the growth of pancreatic beta cells. The sequence is that of BTB/POZ domain-containing protein 10 (BTBD10) from Pongo abelii (Sumatran orangutan).